A 165-amino-acid chain; its full sequence is Endoribonuclease YbeY (165 aa).

Zn(2+)-binding residues include His130, His134, and His140.

This sequence belongs to the endoribonuclease YbeY family. The cofactor is Zn(2+).

Its subcellular location is the cytoplasm. Its function is as follows. Single strand-specific metallo-endoribonuclease involved in late-stage 70S ribosome quality control and in maturation of the 3' terminus of the 16S rRNA. The polypeptide is Endoribonuclease YbeY (Streptococcus pyogenes serotype M28 (strain MGAS6180)).